Here is a 1390-residue protein sequence, read N- to C-terminus: General transcriptional corepressor trfA (1390 aa).

A disordered region spans residues 53–143; it reads QQQQQHQQHQ…QQQQQQQQQQ (91 aa). TPR repeat units follow at residues 171-204, 206-238, 239-272, 275-308, 312-345, 349-382, 384-419, 420-453, 454-487, and 489-521; these read ESIW…NPFS, KALT…ESKN, GEVW…LPNP, PNLW…DNKF, TEIY…PPLP, SDIW…NATH, KVLQ…DSSD, AQTW…DGRN, PTFW…NPFL, and EVWY…DPHN. Disordered stretches follow at residues 539–596, 632–938, and 958–1390; these read PIGK…NSFV, ERGR…YNNI, and LDEE…KLER. The segment covering 540–557 has biased composition (basic and acidic residues); it reads IGKDGYDLQNGEHGEHGG. Positions 582 to 593 are enriched in low complexity; it reads QNNRNGNNNGNN. The span at 632–641 shows a compositional bias: basic and acidic residues; the sequence is ERGRGEDMHN. A compositionally biased stretch (low complexity) spans 644–744; that stretch reads HSQYSNSMSM…MNDNVNSKNN (101 aa). The segment covering 745–803 has biased composition (basic and acidic residues); that stretch reads DVLDRRYKGILEREKTSPNGDGRDNRDNIRDNRDNRDSRDGRDNRDGRDSRDRIQEYTR. Residues 805 to 846 show a composition bias toward low complexity; that stretch reads YNNNNNNNNSISSINNNNNNNNNNYNNNNNNNNNNNNNNNNN. Residues 857 to 871 are compositionally biased toward basic and acidic residues; the sequence is HNDRRSYERDNKERI. Low complexity-rich tracts occupy residues 872–898 and 917–937; these read NNNN…NNNN and NNSN…NYNN. Basic and acidic residues-rich tracts occupy residues 977–993, 1000–1029, 1037–1099, and 1120–1135; these read KEAE…KERS, EKPD…EKES, KEIE…EKES, and TKKD…EKKL. Polar residues predominate over residues 1136–1146; that stretch reads SSVSPTTTAVE. Residues 1147–1169 are compositionally biased toward basic and acidic residues; sequence QSRDETKELEMDTKEDSEKEKKS. 2 stretches are compositionally biased toward low complexity: residues 1170-1180 and 1192-1203; these read STTTTAAASES and TTTTTTTTNTTT. Basic and acidic residues predominate over residues 1206 to 1218; that stretch reads PTHKDKESSKNDD. Low complexity predominate over residues 1219–1228; sequence TTTTTTTTTT. A compositionally biased stretch (polar residues) spans 1229–1239; the sequence is KSAKSPNSSPT. Basic and acidic residues predominate over residues 1240 to 1263; it reads RSDEVVEPHQDASQEEINKRKLED. Low complexity-rich tracts occupy residues 1277–1289 and 1315–1337; these read STPS…STPS and SSSS…TNSS. Positions 1339–1374 are enriched in basic and acidic residues; that stretch reads KNERDRDRERERERERDREREREREREREREREKNK.

The protein belongs to the CYC8/SSN6 family. Associates with tupA to form the trfA-tupA corepressor complex.

The protein resides in the nucleus. Acts as a component of the trfA-tupA corepressor complex which is involved in the repression of many genes in a wide variety of physiological processes. May also be involved in the derepression of at least some target genes. The complex is recruited to target genes by interaction with DNA-bound transcriptional repressors. The complex recruits histone deacetylases to produce a repressive chromatin structure, interacts with hypoacetylated N-terminal tails of histones H3 and H4 that have been programmed for repression by the action of histone deacetylases and interferes directly with the transcriptional machinery by associating with the RNA polymerase II mediator complex. Required for normal growth and for aggregation in early development. Required for a proper chemotactic response to cAMP. The chain is General transcriptional corepressor trfA (trfA) from Dictyostelium discoideum (Social amoeba).